The following is a 49-amino-acid chain: uncharacterized protein (49 aa).

Residues 5–27 (ILEILSAFIRILFKLLYCWALFF) form a helical membrane-spanning segment.

It localises to the membrane. This is an uncharacterized protein from Saccharomyces cerevisiae (strain ATCC 204508 / S288c) (Baker's yeast).